The sequence spans 357 residues: MRKRIGILTSGGDCPGLNCVIRAVVSHATLTYDWEVLGIPYATQGLRERQAIALNMHGWDLRGIDPLLNMGGTILGTINKGDTLAHVDEMLASYQALALDALIVIGGDGSLGILHELASRGNWNLVAIPKTIDNDVALTERAVGFDTAVNTIVDALNRLTFTAASHDRVMIVEVMGRSAGHLALHAGIAGGADVILIPEISYTISGLCQHIAELRDRWQRKFAIVVVAEGAKLCLEDVQENIASSCAPSKCGRGQYIADQIAQCSKNLIDTRVSVLGHIQRGGIPSALDRLTATVFGKTAVDLIAQGKFGQMVAWQNGEAIPVPIQDVVAQSPLHVNPQGSLVQSARCLGIYVGEKT.

ATP-binding positions include glycine 12, 80-81 (KG), and 107-110 (GDGS). Aspartate 108 contributes to the Mg(2+) binding site. Substrate is bound by residues 131 to 133 (TID), arginine 168, 175 to 177 (MGR), glutamate 229, arginine 272, and 278 to 281 (HIQR). The active-site Proton acceptor is the aspartate 133.

It belongs to the phosphofructokinase type A (PFKA) family. Mixed-substrate PFK group III subfamily. As to quaternary structure, homodimer or homotetramer. Requires Mg(2+) as cofactor.

It localises to the cytoplasm. It carries out the reaction beta-D-fructose 6-phosphate + ATP = beta-D-fructose 1,6-bisphosphate + ADP + H(+). It participates in carbohydrate degradation; glycolysis; D-glyceraldehyde 3-phosphate and glycerone phosphate from D-glucose: step 3/4. Subject to allosteric activation by ADP and other diphosphonucleosides, and inhibition by phosphoenolpyruvate. Functionally, catalyzes the phosphorylation of D-fructose 6-phosphate to fructose 1,6-bisphosphate by ATP, the first committing step of glycolysis. This is ATP-dependent 6-phosphofructokinase 2 from Nostoc sp. (strain PCC 7120 / SAG 25.82 / UTEX 2576).